We begin with the raw amino-acid sequence, 90 residues long: UPF0213 protein lin0209 (90 aa).

One can recognise a GIY-YIG domain in the interval 5-80; that stretch reads NEHFFYVLKC…KKLSRKNKDS (76 aa).

Belongs to the UPF0213 family.

The protein is UPF0213 protein lin0209 of Listeria innocua serovar 6a (strain ATCC BAA-680 / CLIP 11262).